The following is a 665-amino-acid chain: Cysteine-rich receptor-like protein kinase 41 (665 aa).

A signal peptide spans 1 to 27 (MTSSCSLSRPQHLFFFFFLFVPFLSLG). Topologically, residues 28–280 (QQISVDINSA…DPKPGNDKVK (253 aa)) are extracellular. Gnk2-homologous domains follow at residues 42-148 (PSNP…DKPI) and 154-260 (TSPV…SDLR). N120, N165, and N236 each carry an N-linked (GlcNAc...) asparagine glycan. Residues 281–301 (IIIATVCSVIGFAIIAVFLYF) form a helical membrane-spanning segment. At 302 to 665 (FMTRNRRTAK…DVTITEFDAR (364 aa)) the chain is on the cytoplasmic side. Residues 344 to 624 (FSRDNQLGEG…VVMLNANSFT (281 aa)) form the Protein kinase domain. ATP contacts are provided by residues 350 to 358 (LGEGGFGAV) and K372. Residue Y417 is modified to Phosphotyrosine. D469 serves as the catalytic Proton acceptor. Residue S473 is modified to Phosphoserine. T511 is modified (phosphothreonine). Y519 is modified (phosphotyrosine).

It belongs to the protein kinase superfamily. Ser/Thr protein kinase family. CRK subfamily.

Its subcellular location is the membrane. The enzyme catalyses L-seryl-[protein] + ATP = O-phospho-L-seryl-[protein] + ADP + H(+). It catalyses the reaction L-threonyl-[protein] + ATP = O-phospho-L-threonyl-[protein] + ADP + H(+). The protein is Cysteine-rich receptor-like protein kinase 41 (CRK41) of Arabidopsis thaliana (Mouse-ear cress).